We begin with the raw amino-acid sequence, 291 residues long: Quinol oxidase subunit 2 (291 aa).

The first 28 residues, 1–28 (MQLKKAFWKLASLLPXSLLLFLGGCDKK), serve as a signal peptide directing secretion. A run of 2 helical transmembrane segments spans residues 49-69 (SFLL…VILI) and 91-111 (LEII…IPTV).

This sequence belongs to the cytochrome c oxidase subunit 2 family.

Its subcellular location is the cell membrane. The catalysed reaction is 2 a quinol + O2 = 2 a quinone + 2 H2O. Functionally, catalyzes quinol oxidation with the concomitant reduction of oxygen to water. Subunit II transfers the electrons from a quinol to the binuclear center of the catalytic subunit I. This is Quinol oxidase subunit 2 from Bacillus cereus (strain ATCC 10987 / NRS 248).